A 398-amino-acid polypeptide reads, in one-letter code: Ribosomal RNA large subunit methyltransferase I (398 aa).

One can recognise a PUA domain in the interval 2–79; sequence SVRLVLAKGR…LSESIDIAFF (78 aa).

The protein belongs to the methyltransferase superfamily. RlmI family.

It localises to the cytoplasm. The catalysed reaction is cytidine(1962) in 23S rRNA + S-adenosyl-L-methionine = 5-methylcytidine(1962) in 23S rRNA + S-adenosyl-L-homocysteine + H(+). Its function is as follows. Specifically methylates the cytosine at position 1962 (m5C1962) of 23S rRNA. The polypeptide is Ribosomal RNA large subunit methyltransferase I (Shigella dysenteriae serotype 1 (strain Sd197)).